We begin with the raw amino-acid sequence, 75 residues long: UPF0352 protein PMI0824 (75 aa).

Belongs to the UPF0352 family.

This Proteus mirabilis (strain HI4320) protein is UPF0352 protein PMI0824.